The following is a 62-amino-acid chain: Potassium channel toxin alpha-KTx 18.3 (62 aa).

The first 26 residues, 1–26 (MHFSGVAFILISMVLIGSIFETTVEA), serve as a signal peptide directing secretion. 3 cysteine pairs are disulfide-bonded: C34-C53, C39-C58, and C43-C60.

The protein belongs to the short scorpion toxin superfamily. Potassium channel inhibitor family. Alpha-KTx 18 subfamily. As to expression, expressed by the venom gland.

The protein resides in the secreted. Functionally, probable voltage-gated potassium channel inhibitor. The polypeptide is Potassium channel toxin alpha-KTx 18.3 (Tityus discrepans (Venezuelan scorpion)).